The chain runs to 356 residues: uncharacterized protein (356 aa).

Positions 1-21 are cleaved as a signal peptide; that stretch reads MKLITAPCRALLALPFCYAFS.

This is an uncharacterized protein from Escherichia coli (strain K12).